The primary structure comprises 350 residues: Putative [LysW]-lysine/[LysW]-ornithine hydrolase (350 aa).

Position 72 (H72) interacts with Zn(2+). D74 is a catalytic residue. Zn(2+) is bound at residue D96. E128 acts as the Proton acceptor in catalysis. Zn(2+) is bound by residues E129, E152, and H321.

The protein belongs to the peptidase M20A family. LysK subfamily. It depends on Zn(2+) as a cofactor. Requires Co(2+) as cofactor.

It is found in the cytoplasm. The catalysed reaction is [amino-group carrier protein]-C-terminal-gamma-(L-lysyl)-L-glutamate + H2O = [amino-group carrier protein]-C-terminal-L-glutamate + L-lysine. It carries out the reaction [amino-group carrier protein]-C-terminal-gamma-(L-ornithyl)-L-glutamate + H2O = [amino-group carrier protein]-C-terminal-L-glutamate + L-ornithine. Its pathway is amino-acid biosynthesis; L-lysine biosynthesis via AAA pathway; L-lysine from L-alpha-aminoadipate (Thermus route): step 5/5. The protein operates within amino-acid biosynthesis; L-arginine biosynthesis. Its function is as follows. Catalyzes the release of L-lysine from [LysW]-gamma-L-lysine and the release of L-ornithine from [LysW]-L-ornithine. This is Putative [LysW]-lysine/[LysW]-ornithine hydrolase from Aeropyrum pernix (strain ATCC 700893 / DSM 11879 / JCM 9820 / NBRC 100138 / K1).